The chain runs to 72 residues: Translation initiation factor IF-1 (72 aa).

An S1-like domain is found at 1 to 72 (MAKEDNIEMQ…SKGRIVFRAR (72 aa)).

This sequence belongs to the IF-1 family. Component of the 30S ribosomal translation pre-initiation complex which assembles on the 30S ribosome in the order IF-2 and IF-3, IF-1 and N-formylmethionyl-tRNA(fMet); mRNA recruitment can occur at any time during PIC assembly.

It is found in the cytoplasm. In terms of biological role, one of the essential components for the initiation of protein synthesis. Stabilizes the binding of IF-2 and IF-3 on the 30S subunit to which N-formylmethionyl-tRNA(fMet) subsequently binds. Helps modulate mRNA selection, yielding the 30S pre-initiation complex (PIC). Upon addition of the 50S ribosomal subunit IF-1, IF-2 and IF-3 are released leaving the mature 70S translation initiation complex. The protein is Translation initiation factor IF-1 of Shewanella frigidimarina (strain NCIMB 400).